The primary structure comprises 356 residues: V-type proton ATPase subunit d (356 aa).

Belongs to the V-ATPase V0D/AC39 subunit family. In terms of assembly, V-ATPase is a heteromultimeric enzyme composed of a peripheral catalytic V1 complex (components A to H) attached to an integral membrane V0 proton pore complex (components: a, c, c', c'' and d).

Its function is as follows. Subunit of the integral membrane V0 complex of vacuolar ATPase. Vacuolar ATPase is responsible for acidifying a variety of intracellular compartments in eukaryotic cells, thus providing most of the energy required for transport processes in the vacuolar system. This is V-type proton ATPase subunit d (vatD-1) from Dictyostelium discoideum (Social amoeba).